Reading from the N-terminus, the 448-residue chain is Trigger factor (448 aa).

A PPIase FKBP-type domain is found at 161 to 246 (GDQVTIDFEG…VHKVAGKQLP (86 aa)). The tract at residues 428–448 (ALQAAQQQEGAEEEAQEETSA) is disordered. The segment covering 437 to 448 (GAEEEAQEETSA) has biased composition (acidic residues).

Belongs to the FKBP-type PPIase family. Tig subfamily.

The protein resides in the cytoplasm. It catalyses the reaction [protein]-peptidylproline (omega=180) = [protein]-peptidylproline (omega=0). Involved in protein export. Acts as a chaperone by maintaining the newly synthesized protein in an open conformation. Functions as a peptidyl-prolyl cis-trans isomerase. This chain is Trigger factor, found in Chromohalobacter salexigens (strain ATCC BAA-138 / DSM 3043 / CIP 106854 / NCIMB 13768 / 1H11).